The following is a 283-amino-acid chain: 4-hydroxybenzoate octaprenyltransferase (283 aa).

9 consecutive transmembrane segments (helical) span residues 16–36 (PIGT…AGAG), 40–60 (LRIV…GCVI), 85–105 (ISAT…FGLV), 108–128 (LNTE…LYPF), 135–155 (LPQI…FTAL), 160–180 (WFIA…YDTE), 204–224 (FDRL…GWIL), 226–246 (LITV…LFAY), and 263–283 (FLHN…HYWF).

It belongs to the UbiA prenyltransferase family. It depends on Mg(2+) as a cofactor.

It localises to the cell inner membrane. The catalysed reaction is all-trans-octaprenyl diphosphate + 4-hydroxybenzoate = 4-hydroxy-3-(all-trans-octaprenyl)benzoate + diphosphate. It participates in cofactor biosynthesis; ubiquinone biosynthesis. Its function is as follows. Catalyzes the prenylation of para-hydroxybenzoate (PHB) with an all-trans polyprenyl group. Mediates the second step in the final reaction sequence of ubiquinone-8 (UQ-8) biosynthesis, which is the condensation of the polyisoprenoid side chain with PHB, generating the first membrane-bound Q intermediate 3-octaprenyl-4-hydroxybenzoate. This chain is 4-hydroxybenzoate octaprenyltransferase, found in Idiomarina loihiensis (strain ATCC BAA-735 / DSM 15497 / L2-TR).